The following is an 85-amino-acid chain: Putative membrane protein insertion efficiency factor (85 aa).

It belongs to the UPF0161 family.

The protein resides in the cell inner membrane. Its function is as follows. Could be involved in insertion of integral membrane proteins into the membrane. The sequence is that of Putative membrane protein insertion efficiency factor from Serratia proteamaculans (strain 568).